We begin with the raw amino-acid sequence, 398 residues long: Homeobox protein knotted-1-like 1 (398 aa).

Disordered stretches follow at residues 20-61 (SPIS…HHHQ), 78-102 (NCFR…ASSS), and 241-273 (LNNP…EIDP). A compositionally biased stretch (low complexity) spans 23–56 (SSSNKNDNTSDTNNNNNNNNSSNYGPGYNNTNNN). Residues 87–102 (PNNNNNPSVKSEASSS) show a composition bias toward polar residues. Positions 279-299 (ELKNHLLKKYSGYLSSLKQEL) constitute an ELK domain. Residues 300–363 (SKKKKKGKLP…NQRKRHWKPS (64 aa)) constitute a DNA-binding region (homeobox; TALE-type).

The protein belongs to the TALE/KNOX homeobox family. May form heterodimeric complex with the TALE/BELL proteins BEL1, BLH2, BLH8/PNF and BLH9/PNY. Interacts with OFP1, OFP2, OFP4, OFP6 and OFP12. Interacts with CCT7 and CCT8. Interacts with KNATM-B. Binds to AGO10/PNH. Interacts with BZIP30. In terms of tissue distribution, expressed in the vegetative meristem. Present in the base of flower primordia.

Its subcellular location is the nucleus. In terms of biological role, may play a role in meristem function, and may be involved in maintaining cells in an undifferentiated, meristematic state, and its expression disappears at the same time the shoot apex undergoes the transition from vegetative to reproductive development. Positive regulator of LATERAL ORGAN BOUNDARIES (LOB). Probably binds to the DNA sequence 5'-TGAC-3'. Able to traffic from the L1 to the L2/L3 layers of the meristem, presumably through plasmodesmata. The chain is Homeobox protein knotted-1-like 1 (KNAT1) from Arabidopsis thaliana (Mouse-ear cress).